The primary structure comprises 507 residues: Proton-coupled zinc antiporter SLC30A1 (507 aa).

The Cytoplasmic segment spans residues 1-10 (MGCWGRNRGR). Residues 11–31 (LLCMLALTFMFMVLEVVVSRV) traverse the membrane as a helical segment. Topologically, residues 32-35 (TSSL) are extracellular. Residues 36–56 (AMLSDSFHMLSDVLALVVALV) form a helical membrane-spanning segment. The Zn(2+) site is built by H43 and D47. Residues 57-78 (AERFARRTHATQKNTFGWIRAE) are Cytoplasmic-facing. The helical transmembrane segment at 79-99 (VMGALVNAIFLTGLCFAILLE) threads the bilayer. At 100 to 113 (AIERFIEPHEMQQP) the chain is on the extracellular side. Residues 114-134 (LVVLGVGVAGLLVNVLGLCLF) traverse the membrane as a helical segment. The Cytoplasmic segment spans residues 135–248 (HHHSGFSQDS…RAGQLNMRGV (114 aa)). The disordered stretch occupies residues 142-217 (QDSGHGHSHG…DPENPRSGDT (76 aa)). Residues 146 to 158 (HGHSHGGHGHGHG) are 6 X 2 AA approximate repeats of H-G. The segment covering 147 to 167 (GHSHGGHGHGHGLPKGPRVKS) has biased composition (basic residues). Over residues 189–201 (TNTLVANTSNSNG) the composition is skewed to polar residues. The chain crosses the membrane as a helical span at residues 249 to 269 (FLHVLGDALGSVIVVVNALVF). 2 residues coordinate Zn(2+): H251 and D255. Residues 270–308 (YFSWKGCSEGDFCVNPCFPDPCKAFVEIINSTHASVYEA) are Extracellular-facing. N-linked (GlcNAc...) asparagine glycosylation occurs at N299. A helical membrane pass occupies residues 309–329 (GPCWVLYLDPTLCVVMVCILL). At 330 to 507 (YTTYPLLKES…MPNKQPESSL (178 aa)) the chain is on the cytoplasmic side. Position 506 is a phosphoserine (S506).

This sequence belongs to the cation diffusion facilitator (CDF) transporter (TC 2.A.4) family. SLC30A subfamily. As to quaternary structure, homodimer. Interacts with TMEM163. Interacts and forms a complex with TMC6 and TMC8; the interaction regulates zinc transport into the ER. In terms of assembly, (Microbial infection) Interacts with human papillomavirus 16/HPV16 protein E5; the interaction alleviates SLC30A1-mediated transcription factors inhibition. Post-translationally, N-glycosylated at Asn-299. N-glycosylation promotes endocytosis and degradation through the proteasomal or lysosomal pathways.

It is found in the cell membrane. Its subcellular location is the basolateral cell membrane. The protein localises to the cytoplasmic vesicle membrane. It localises to the cytoplasm. The protein resides in the endoplasmic reticulum membrane. It is found in the golgi apparatus membrane. Its subcellular location is the nucleus membrane. It carries out the reaction Zn(2+)(in) + 2 H(+)(out) = Zn(2+)(out) + 2 H(+)(in). Zinc ion:proton antiporter that could function at the plasma membrane mediating zinc efflux from cells against its electrochemical gradient protecting them from intracellular zinc accumulation and toxicity. Alternatively, could prevent the transport to the plasma membrane of CACNB2, the L-type calcium channels regulatory subunit, through a yet to be defined mechanism. By modulating the expression of these channels at the plasma membrane, could prevent calcium and zinc influx into cells. By the same mechanism, could also prevent L-type calcium channels-mediated heavy metal influx into cells. In some cells, could also function as a zinc ion:proton antiporter mediating zinc entry into the lumen of cytoplasmic vesicles. In macrophages, can increase zinc ions concentration into the lumen of cytoplasmic vesicles containing engulfed bacteria and could help inactivate them. Forms a complex with TMC6/EVER1 and TMC8/EVER2 at the ER membrane of keratynocytes which facilitates zinc uptake into the ER. Down-regulates the activity of transcription factors induced by zinc and cytokines. The protein is Proton-coupled zinc antiporter SLC30A1 of Homo sapiens (Human).